The primary structure comprises 738 residues: Cleavage and polyadenylation specificity factor subunit 2 (738 aa).

This sequence belongs to the metallo-beta-lactamase superfamily. RNA-metabolizing metallo-beta-lactamase-like family. CPSF2/YSH1 subfamily. As to quaternary structure, CPSF is a heterotetramer composed of four distinct subunits 160, 100, 70 and 30 kDa.

The protein resides in the nucleus. In terms of biological role, CPSF plays a key role in pre-mRNA 3'-end formation, recognizing the AAUAAA signal sequence and interacting with poly(A)polymerase and other factors to bring about cleavage and poly(A) addition. This Oryza sativa subsp. japonica (Rice) protein is Cleavage and polyadenylation specificity factor subunit 2.